A 356-amino-acid polypeptide reads, in one-letter code: tRNA N6-adenosine threonylcarbamoyltransferase (356 aa).

Residues histidine 115 and histidine 119 each coordinate Fe cation. Substrate contacts are provided by residues 138–142 (LVSGG), aspartate 171, glycine 184, and asparagine 277. Aspartate 305 contacts Fe cation.

It belongs to the KAE1 / TsaD family. Fe(2+) is required as a cofactor.

Its subcellular location is the cytoplasm. The catalysed reaction is L-threonylcarbamoyladenylate + adenosine(37) in tRNA = N(6)-L-threonylcarbamoyladenosine(37) in tRNA + AMP + H(+). In terms of biological role, required for the formation of a threonylcarbamoyl group on adenosine at position 37 (t(6)A37) in tRNAs that read codons beginning with adenine. Is involved in the transfer of the threonylcarbamoyl moiety of threonylcarbamoyl-AMP (TC-AMP) to the N6 group of A37, together with TsaE and TsaB. TsaD likely plays a direct catalytic role in this reaction. The chain is tRNA N6-adenosine threonylcarbamoyltransferase from Polaromonas naphthalenivorans (strain CJ2).